Reading from the N-terminus, the 439-residue chain is Glutamate--tRNA ligase 2 (439 aa).

The 'HIGH' region signature appears at 9–19 (PSPTGHLHVGN). The 'KMSKS' region signature appears at 233 to 237 (KLSKR). K236 serves as a coordination point for ATP.

Belongs to the class-I aminoacyl-tRNA synthetase family. Glutamate--tRNA ligase type 1 subfamily. In terms of assembly, monomer.

The protein resides in the cytoplasm. It catalyses the reaction tRNA(Glu) + L-glutamate + ATP = L-glutamyl-tRNA(Glu) + AMP + diphosphate. Its function is as follows. Catalyzes the attachment of glutamate to tRNA(Glu) in a two-step reaction: glutamate is first activated by ATP to form Glu-AMP and then transferred to the acceptor end of tRNA(Glu). The polypeptide is Glutamate--tRNA ligase 2 (Sphingopyxis alaskensis (strain DSM 13593 / LMG 18877 / RB2256) (Sphingomonas alaskensis)).